An 86-amino-acid polypeptide reads, in one-letter code: MEPTKDETHAIVEFVDVLLRDGAVIQADVIVTVADIPLLGISLRAAIAGMTTMTAYGMFENWDATHRQRSMTGGRTIPVPNEKNGK.

Belongs to the gas vesicle GvpA family. As to quaternary structure, gvpF to GvpM interact with each other in vitro, and may form multi-subunit complex(es). Might interact with GvpA.

Its subcellular location is the gas vesicle. Functionally, proteins GvpF to GvpM might be involved in nucleating gas vesicle formation. A minor component of the gas vesicle. Gas vesicles are small, hollow, gas filled protein structures found in some microorganisms. They allow positioning of halobacteria at the optimal depth for growth in the poorly aerated, shallow brine pools of their habitat. In terms of biological role, expression of a 9.5 kb mc-vac DNA fragment containing 2 divergently transcribed regions (gvpD-gvpE-gvpF-gvpG-gvpH-gvpI-gvpJ-gvpK-gvpL-gvpM and gvpA-gvpC-gvpN-gvpO) allows H.volcanii to produce gas vesicles. The chain is Gas vesicle protein M from Haloferax mediterranei (strain ATCC 33500 / DSM 1411 / JCM 8866 / NBRC 14739 / NCIMB 2177 / R-4) (Halobacterium mediterranei).